The following is a 485-amino-acid chain: Glutamyl-tRNA(Gln) amidotransferase subunit A (485 aa).

Active-site charge relay system residues include Lys75 and Ser150. The active-site Acyl-ester intermediate is Ser174.

It belongs to the amidase family. GatA subfamily. Heterotrimer of A, B and C subunits.

It carries out the reaction L-glutamyl-tRNA(Gln) + L-glutamine + ATP + H2O = L-glutaminyl-tRNA(Gln) + L-glutamate + ADP + phosphate + H(+). Its function is as follows. Allows the formation of correctly charged Gln-tRNA(Gln) through the transamidation of misacylated Glu-tRNA(Gln) in organisms which lack glutaminyl-tRNA synthetase. The reaction takes place in the presence of glutamine and ATP through an activated gamma-phospho-Glu-tRNA(Gln). This chain is Glutamyl-tRNA(Gln) amidotransferase subunit A, found in Trichodesmium erythraeum (strain IMS101).